Here is a 150-residue protein sequence, read N- to C-terminus: uncharacterized protein (150 aa).

The HTH marR-type domain maps to 1-133 (MNDILREIGM…ISALLHRVRK (133 aa)). The H-T-H motif DNA-binding region spans 47 to 70 (QEKLAEMIKVDRTTAARAIKKLEM).

This is an uncharacterized protein from Bacillus subtilis (strain 168).